The chain runs to 421 residues: Histidine--tRNA ligase (421 aa).

The protein belongs to the class-II aminoacyl-tRNA synthetase family. In terms of assembly, homodimer.

Its subcellular location is the cytoplasm. It catalyses the reaction tRNA(His) + L-histidine + ATP = L-histidyl-tRNA(His) + AMP + diphosphate + H(+). The polypeptide is Histidine--tRNA ligase (Solidesulfovibrio magneticus (strain ATCC 700980 / DSM 13731 / RS-1) (Desulfovibrio magneticus)).